A 431-amino-acid polypeptide reads, in one-letter code: Histidine--tRNA ligase (431 aa).

This sequence belongs to the class-II aminoacyl-tRNA synthetase family. As to quaternary structure, homodimer.

The protein localises to the cytoplasm. The catalysed reaction is tRNA(His) + L-histidine + ATP = L-histidyl-tRNA(His) + AMP + diphosphate + H(+). The polypeptide is Histidine--tRNA ligase (Neisseria meningitidis serogroup C / serotype 2a (strain ATCC 700532 / DSM 15464 / FAM18)).